Here is a 419-residue protein sequence, read N- to C-terminus: MTTQLEQAWELAKQRFAAVGIDVEEALRQLDRLPVSMHCWQGDDVSGFENPEGSLTGGIQATGNYPGKARNASELRADLEQAMRLIPGPKRLNLHAIYLESDTPVSRDQIKPEHFKNWVEWAKANQLGLDFNPSCFSHPLSADGFTLSHADDSIRQFWIDHCKASRRVSAYFGEQLGTPSVMNIWIPDGMKDITVDRLAPRQRLLAALDEVISEKLNPAHHIDAVESKLFGIGAESYTVGSNEFYLGYATSRQTALCLDAGHFHPTEVISDKISAAMLYVPQLLLHVSRPVRWDSDHVVLLDDETQAIASEIVRHDLFDRVHIGLDFFDASINRIAAWVIGTRNMKKALLRALLEPTAELRKLEAAGDYTARLALLEEQKSLPWQAVWEMYCQRHDTPAGSEWLESVRAYEKEILSRRG.

The Mn(2+) site is built by His-262, Asp-294, and Asp-296.

It belongs to the rhamnose isomerase family. As to quaternary structure, homotetramer. Requires Mn(2+) as cofactor.

Its subcellular location is the cytoplasm. It catalyses the reaction L-rhamnopyranose = L-rhamnulose. It participates in carbohydrate degradation; L-rhamnose degradation; glycerone phosphate from L-rhamnose: step 1/3. Catalyzes the interconversion of L-rhamnose and L-rhamnulose. The protein is L-rhamnose isomerase of Escherichia coli O9:H4 (strain HS).